A 459-amino-acid chain; its full sequence is MARHSVHHQAQRPPRAKNPQEQQRRPMGQTTLPAEQEESRVKCKNCGAFGHSARSKTCPIKRWSGALPLQALGSHKEKENLKPAKAQLPFTTPGPFTTNDREKERSPSPQQQQSEAPTQTFPRTPQEKMQEAWKEPAEDCLFLRHPTMPLPVHTTKKRSVLGPVSTGPPPVNKPEMRLLCPSGHNDSPQLSTCGPTKGHGRDVTASLLPVLKSSHQTPTLSARLPANRPDMSSHGALQPAMQALALGPGLKSQAEIKHPDADAKPRPQQVRKQCGQDSRTQAPDKEPAPVPTQTFQNPAKKARFSSFQTPALRTQLPDVGAVQTLQPPRTATGLGSKEAPKATAETAATKTATLQPRVNLQPAPSSPFLGPAQGCPVLQPGPPIHVPGRPGSVTFMRGDKGQKSPRFRMPPTSRPPENSASAQSPRFSRQPEGQGPQVSTSVLYEDLLVTSSSEDSDSD.

Basic residues predominate over residues 1-10; that stretch reads MARHSVHHQA. Disordered regions lie at residues 1–41, 74–136, 153–239, and 259–459; these read MARH…ESRV, SHKE…WKEP, HTTK…ALQP, and PDAD…SDSD. Positions 125–136 are enriched in basic and acidic residues; it reads PQEKMQEAWKEP. Polar residues predominate over residues 184–194; that stretch reads HNDSPQLSTCG. The segment covering 341 to 353 has biased composition (low complexity); the sequence is KATAETAATKTAT. Positions 415–427 are enriched in polar residues; the sequence is PPENSASAQSPRF.

This sequence belongs to the FAM90 family.

The sequence is that of Protein FAM90A27P (FAM90A27P) from Homo sapiens (Human).